The chain runs to 69 residues: Large ribosomal subunit protein bL31 (69 aa).

Residues Cys16, Cys18, Cys36, and Cys39 each contribute to the Zn(2+) site.

Belongs to the bacterial ribosomal protein bL31 family. Type A subfamily. As to quaternary structure, part of the 50S ribosomal subunit. It depends on Zn(2+) as a cofactor.

In terms of biological role, binds the 23S rRNA. The polypeptide is Large ribosomal subunit protein bL31 (Ruminiclostridium cellulolyticum (strain ATCC 35319 / DSM 5812 / JCM 6584 / H10) (Clostridium cellulolyticum)).